The following is a 334-amino-acid chain: Protein-methionine-sulfoxide reductase catalytic subunit MsrP (334 aa).

Residues 1–44 (MKKKQFLKESDVTAESVFFMKRRQVLKALGISAAALSLPHAAHA) constitute a signal peptide (tat-type signal). Mo-molybdopterin-binding positions include N88, 91 to 92 (YE), C146, T181, N233, R238, and 249 to 251 (GIK).

The protein belongs to the MsrP family. As to quaternary structure, heterodimer of a catalytic subunit (MsrP) and a heme-binding subunit (MsrQ). It depends on Mo-molybdopterin as a cofactor. Predicted to be exported by the Tat system. The position of the signal peptide cleavage has not been experimentally proven.

The protein localises to the periplasm. It catalyses the reaction L-methionyl-[protein] + a quinone + H2O = L-methionyl-(S)-S-oxide-[protein] + a quinol. The catalysed reaction is L-methionyl-[protein] + a quinone + H2O = L-methionyl-(R)-S-oxide-[protein] + a quinol. In terms of biological role, part of the MsrPQ system that repairs oxidized periplasmic proteins containing methionine sulfoxide residues (Met-O), using respiratory chain electrons. Thus protects these proteins from oxidative-stress damage caused by reactive species of oxygen and chlorine generated by the host defense mechanisms. MsrPQ is essential for the maintenance of envelope integrity under bleach stress, rescuing a wide series of structurally unrelated periplasmic proteins from methionine oxidation, including the primary periplasmic chaperone SurA and the lipoprotein Pal. The catalytic subunit MsrP is non-stereospecific, being able to reduce both (R-) and (S-) diastereoisomers of methionine sulfoxide. This Escherichia coli O139:H28 (strain E24377A / ETEC) protein is Protein-methionine-sulfoxide reductase catalytic subunit MsrP.